Here is a 137-residue protein sequence, read N- to C-terminus: Large ribosomal subunit protein uL16 (137 aa).

It belongs to the universal ribosomal protein uL16 family. In terms of assembly, part of the 50S ribosomal subunit.

Functionally, binds 23S rRNA and is also seen to make contacts with the A and possibly P site tRNAs. The protein is Large ribosomal subunit protein uL16 of Mycoplasma capricolum subsp. capricolum (strain California kid / ATCC 27343 / NCTC 10154).